Here is a 387-residue protein sequence, read N- to C-terminus: Protein adenylyltransferase VopS (387 aa).

Residues 76-77, 122-124, 353-355, and Arg359 contribute to the ATP site; these read IT, LDS, and GNG. One can recognise a Fido domain in the interval 278 to 387; it reads LNMDNLKELH…NAENSLHGIK (110 aa).

Its subcellular location is the secreted. The catalysed reaction is L-tyrosyl-[protein] + ATP = O-(5'-adenylyl)-L-tyrosyl-[protein] + diphosphate. It carries out the reaction L-threonyl-[protein] + ATP = 3-O-(5'-adenylyl)-L-threonyl-[protein] + diphosphate. Functionally, adenylyltransferase involved in virulence by mediating the addition of adenosine 5'-monophosphate (AMP) to specific threonine residue of host Rho GTPases RhoA, Rac and Cdc42. The resulting AMPylation prevents the interaction of Rho GTPases with downstream effectors, thereby inhibiting actin assembly in infected cells. In Vibrio parahaemolyticus serotype O3:K6 (strain RIMD 2210633), this protein is Protein adenylyltransferase VopS (vopS).